Consider the following 201-residue polypeptide: 3-isopropylmalate dehydratase small subunit (201 aa).

Belongs to the LeuD family. LeuD type 1 subfamily. In terms of assembly, heterodimer of LeuC and LeuD.

The enzyme catalyses (2R,3S)-3-isopropylmalate = (2S)-2-isopropylmalate. It functions in the pathway amino-acid biosynthesis; L-leucine biosynthesis; L-leucine from 3-methyl-2-oxobutanoate: step 2/4. Catalyzes the isomerization between 2-isopropylmalate and 3-isopropylmalate, via the formation of 2-isopropylmaleate. The polypeptide is 3-isopropylmalate dehydratase small subunit (Brucella anthropi (strain ATCC 49188 / DSM 6882 / CCUG 24695 / JCM 21032 / LMG 3331 / NBRC 15819 / NCTC 12168 / Alc 37) (Ochrobactrum anthropi)).